The chain runs to 82 residues: Sulfur carrier protein TusA (82 aa).

Cys19 serves as the catalytic Cysteine persulfide intermediate.

This sequence belongs to the sulfur carrier protein TusA family.

It is found in the cytoplasm. Functionally, sulfur carrier protein which probably makes part of a sulfur-relay system. In Photobacterium profundum (strain SS9), this protein is Sulfur carrier protein TusA.